A 342-amino-acid polypeptide reads, in one-letter code: Tetraacyldisaccharide 4'-kinase (342 aa).

68 to 75 contributes to the ATP binding site; the sequence is TVGGTGKT.

Belongs to the LpxK family.

The catalysed reaction is a lipid A disaccharide + ATP = a lipid IVA + ADP + H(+). It functions in the pathway glycolipid biosynthesis; lipid IV(A) biosynthesis; lipid IV(A) from (3R)-3-hydroxytetradecanoyl-[acyl-carrier-protein] and UDP-N-acetyl-alpha-D-glucosamine: step 6/6. In terms of biological role, transfers the gamma-phosphate of ATP to the 4'-position of a tetraacyldisaccharide 1-phosphate intermediate (termed DS-1-P) to form tetraacyldisaccharide 1,4'-bis-phosphate (lipid IVA). In Burkholderia pseudomallei (strain K96243), this protein is Tetraacyldisaccharide 4'-kinase.